The primary structure comprises 147 residues: Mitochondrial import receptor subunit TOM20 homolog (147 aa).

The Mitochondrial intermembrane segment spans residues 1–3; the sequence is MVA. Residues 4-26 form a helical membrane-spanning segment; that stretch reads VGKTSAIAAGVCGALLLGYCIYF. The Cytoplasmic portion of the chain corresponds to 27 to 147; sequence DRKRRSDPNF…AQNLSEDDVE (121 aa).

Belongs to the Tom20 family. As to quaternary structure, forms part of the preprotein translocase complex of the outer mitochondrial membrane (TOM complex). Interacts with tom22.

The protein resides in the mitochondrion outer membrane. In terms of biological role, central component of the receptor complex responsible for the recognition and translocation of cytosolically synthesized mitochondrial preproteins. Together with tom22 functions as the transit peptide receptor at the surface of the mitochondrion outer membrane and facilitates the movement of preproteins into the tom40 translocation pore. The polypeptide is Mitochondrial import receptor subunit TOM20 homolog (tomm20) (Xenopus laevis (African clawed frog)).